The chain runs to 428 residues: Arabinosyltransferase RRA2 (428 aa).

The Cytoplasmic segment spans residues 1–15 (MAGRRDRIQQLRGSR). Residues 16 to 36 (IAIAIFVGILIGCVCSVLFPN) traverse the membrane as a helical; Signal-anchor for type II membrane protein segment. Over 37–428 (GFFNSGSSLI…ALDSFPDGSD (392 aa)) the chain is Lumenal. The DXD motif signature appears at 250–252 (DVD). Asn278 is a glycosylation site (N-linked (GlcNAc...) asparagine).

The protein belongs to the glycosyltransferase 77 family. As to expression, expressed in roots, rosette and cauline leaves, stems, flowers and siliques.

It is found in the golgi apparatus membrane. In terms of biological role, plays a role in the arabinosylation of cell wall components. Involved in the arabinosylation of extensin proteins in root hair cells. Extensins are structural glycoproteins present in cell walls and its arabinosylation is important for root hair cell development. This is Arabinosyltransferase RRA2 from Arabidopsis thaliana (Mouse-ear cress).